A 142-amino-acid chain; its full sequence is Hemoglobin subunit alpha-A (142 aa).

The region spanning 2-142 is the Globin domain; sequence VLSANDKTNV…VGNVLTAKYR (141 aa). His59 provides a ligand contact to O2. His88 is a binding site for heme b.

The protein belongs to the globin family. As to quaternary structure, heterotetramer of two alpha chains and two beta chains. Red blood cells.

Its function is as follows. Involved in oxygen transport from the lung to the various peripheral tissues. The polypeptide is Hemoglobin subunit alpha-A (HBAA) (Aquila chrysaetos (Golden eagle)).